Reading from the N-terminus, the 248-residue chain is Granulin (248 aa).

The protein belongs to the polyhedrin family.

Functionally, component of the virus occlusion bodies, which are large proteinaceous structures, that protect the virus from the outside environment for extended periods until they are ingested by insect larvae. This Choristoneura fumiferana (Spruce budworm moth) protein is Granulin.